A 300-amino-acid polypeptide reads, in one-letter code: NAD kinase (300 aa).

Aspartate 75 serves as the catalytic Proton acceptor. NAD(+) contacts are provided by residues aspartate 75–glycine 76, asparagine 149–aspartate 150, arginine 177, aspartate 179, threonine 190–serine 195, alanine 214, and glutamine 248.

This sequence belongs to the NAD kinase family. A divalent metal cation serves as cofactor.

Its subcellular location is the cytoplasm. The catalysed reaction is NAD(+) + ATP = ADP + NADP(+) + H(+). Involved in the regulation of the intracellular balance of NAD and NADP, and is a key enzyme in the biosynthesis of NADP. Catalyzes specifically the phosphorylation on 2'-hydroxyl of the adenosine moiety of NAD to yield NADP. This is NAD kinase from Burkholderia cenocepacia (strain HI2424).